The sequence spans 443 residues: ATP-dependent protease ATPase subunit HslU (443 aa).

ATP contacts are provided by residues isoleucine 20, 62–67 (GVGKTE), aspartate 255, glutamate 321, and arginine 393.

Belongs to the ClpX chaperone family. HslU subfamily. In terms of assembly, a double ring-shaped homohexamer of HslV is capped on each side by a ring-shaped HslU homohexamer. The assembly of the HslU/HslV complex is dependent on binding of ATP.

Its subcellular location is the cytoplasm. Functionally, ATPase subunit of a proteasome-like degradation complex; this subunit has chaperone activity. The binding of ATP and its subsequent hydrolysis by HslU are essential for unfolding of protein substrates subsequently hydrolyzed by HslV. HslU recognizes the N-terminal part of its protein substrates and unfolds these before they are guided to HslV for hydrolysis. The chain is ATP-dependent protease ATPase subunit HslU from Helicobacter pylori (strain G27).